Reading from the N-terminus, the 778-residue chain is Mitochondrial intermediate peptidase (778 aa).

A mitochondrion-targeting transit peptide spans 1 to 37 (MIRTVTRPRQWQRWVYSSCLLQRAVPPAAARQQPRFT). Zn(2+) is bound at residue histidine 557. Residue glutamate 558 is part of the active site. Positions 561 and 564 each coordinate Zn(2+).

The protein belongs to the peptidase M3 family. The cofactor is Zn(2+).

It localises to the mitochondrion matrix. It catalyses the reaction Release of an N-terminal octapeptide as second stage of processing of some proteins imported into the mitochondrion.. Functionally, cleaves proteins, imported into the mitochondrion, to their mature size. While most mitochondrial precursor proteins are processed to the mature form in one step by mitochondrial processing peptidase (MPP), the sequential cleavage by MIP of an octapeptide after initial processing by MPP is a required step for a subgroup of nuclear-encoded precursor proteins destined for the matrix or the inner membrane. The sequence is that of Mitochondrial intermediate peptidase (OCT1) from Chaetomium globosum (strain ATCC 6205 / CBS 148.51 / DSM 1962 / NBRC 6347 / NRRL 1970) (Soil fungus).